The sequence spans 182 residues: Protein Syd (182 aa).

It belongs to the Syd family.

It localises to the cell inner membrane. Its function is as follows. Interacts with the SecY protein in vivo. May bind preferentially to an uncomplexed state of SecY, thus functioning either as a chelating agent for excess SecY in the cell or as a regulatory factor that negatively controls the translocase function. The sequence is that of Protein Syd from Pectobacterium carotovorum subsp. carotovorum (strain PC1).